A 648-amino-acid chain; its full sequence is L-aspartate oxidase 2-b, chloroplastic (648 aa).

FAD is bound by residues 98 to 101, Lys120, 127 to 134, and Asp298; these read SGIA and STNYAQGG. The active-site Proton donor/acceptor is the Arg373. Residues Glu458 and 474–475 each bind FAD; that span reads SL.

This sequence belongs to the FAD-dependent oxidoreductase 2 family. NadB subfamily. FAD serves as cofactor.

Its subcellular location is the plastid. The protein localises to the chloroplast. It catalyses the reaction L-aspartate + O2 = iminosuccinate + H2O2. The protein operates within alkaloid biosynthesis; nicotine biosynthesis. It participates in cofactor biosynthesis; NAD(+) biosynthesis; iminoaspartate from L-aspartate (oxidase route): step 1/1. Involved in the biosynthesis of pyridine alkaloid natural products, leading mainly to the production of anabasine, anatabine, nicotine and nornicotine, effective deterrents against herbivores with antiparasitic and pesticide properties (neurotoxins); nornicotine serves as the precursor in the synthesis of the carcinogen compound N'-nitrosonornicotine (NNN). Catalyzes the oxidation of L-aspartate to iminoaspartate. This chain is L-aspartate oxidase 2-b, chloroplastic, found in Nicotiana tabacum (Common tobacco).